Consider the following 685-residue polypeptide: N(6)-adenosine-methyltransferase MT-A70-like (685 aa).

Residues D464–I465 and D482 contribute to the S-adenosyl-L-methionine site. Positions R552 to H565 are positively charged region required for RNA-binding. S-adenosyl-L-methionine contacts are provided by residues K599, R622–N625, and N635–Q636. Positions E657–A685 are disordered. S664 carries the post-translational modification Phosphoserine.

It belongs to the MT-A70-like family. In terms of assembly, interacts with FIP37. Interacts with MTB. Associates with MTB, FIP37, VIR and HAKAI to form the m6A writer complex which is essential for adenosine methylation at specific mRNA sequences.

It is found in the nucleus. It catalyses the reaction an adenosine in mRNA + S-adenosyl-L-methionine = an N(6)-methyladenosine in mRNA + S-adenosyl-L-homocysteine + H(+). In terms of biological role, catalytic subunit of the N6-methyltransferase complex, a multiprotein complex that mediates N6-methyladenosine (m6A) methylation at the 5'-[AG]GAC-3' consensus sites of some mRNAs. Associates with MTB, FIP37, VIR and HAKAI to form the m6A writer complex which is essential for adenosine methylation at specific mRNA sequences. N6-methyladenosine (m6A) plays a role in mRNA stability, processing, translation efficiency and editing. This Arabidopsis thaliana (Mouse-ear cress) protein is N(6)-adenosine-methyltransferase MT-A70-like.